Here is a 527-residue protein sequence, read N- to C-terminus: MSDLQDQEPSIIINGNLEPVGEPDIVEETEVVAQETQETQDADKPKKKVAFTGLEEDGETEEEKRKREFEEGGGLPEQPLNPDFSKLNPLSAEIINRQATINIGTIGHVAHGKSTVVRAISGVQTVRFKDELERNITIKLGYANAKIYKCQEPTCPEPDCYRSFKSDKEISPKCQRPGCPGRYKLVRHVSFVDCPGHDILMSTMLSGAAVMDAALLLIAGNESCPQPQTSEHLAAIEIMKLKHVIILQNKVDLMREESALEHQKSILKFIRGTIADGAPIVPISAQLKYNIDAVNEFIVKTIPVPPRDFMISPRLIVIRSFDVNKPGAEIEDLKGGVAGGSILNGVFKLGDEIEIRPGIVTKDDKGKIQCKPIFSNIVSLFAEQNDLKFAVPGGLIGVGTKVDPTLCRADRLVGQVVGAKGHLPNIYTDIEINYFLLRRLLGVKTDGQKQAKVRKLEPNEVLMVNIGSTATGARVVAVKADMARLQLTSPACTEINEKIALSRRIEKHWRLIGWATIKKGTTLEPIA.

Residues M1 to D83 are disordered. Position 60 is a phosphothreonine (T60). The 210-residue stretch at Q98–R307 folds into the tr-type G domain. Positions G107–S114 are G1. GTP is bound at residue A110 to T115. The G2 stretch occupies residues N135–K139. Positions D193–G196 are G3. Residue N249–D252 participates in GTP binding. Residues N249–D252 form a G4 region. Residue S258 is modified to Phosphoserine. S284–Q286 contacts GTP. A G5 region spans residues S284 to Q286. Residues A515–A527 form an interacts with CDC123 region.

The protein belongs to the TRAFAC class translation factor GTPase superfamily. Classic translation factor GTPase family. EIF2G subfamily. In terms of assembly, eukaryotic translation initiation factor 2 eIF2 is a heterotrimeric complex composed of an alpha, a beta and a gamma subunit. The factors eIF-1, eIF-1A, eIF-2, eIF-3, TIF5/eIF-5 and methionyl-tRNAi form a multifactor complex (MFC) that may bind to the 40S ribosome. Interacts (via C-terminus) with CDC123; the interaction is direct. Interacts with GCD1. Interacts with the eIF2B complex subunits GCD6 and GCD7. Interacts with methionyl-initiator methionine tRNA.

It localises to the cytoplasm. The protein resides in the cytosol. It catalyses the reaction GTP + H2O = GDP + phosphate + H(+). As a subunit of eukaryotic initiation factor 2 eIF2, involved in the early steps of protein synthesis. In the presence of GTP, eIF-2 forms a ternary complex with initiator tRNA Met-tRNAi and then recruits the 40S ribosomal complex and initiation factors eIF-1, eIF-1A and eIF-3 to form the 43S pre-initiation complex (43S PIC), a step that determines the rate of protein translation. The 43S PIC binds to mRNA and scans downstream to the initiation codon, where it forms a 48S initiation complex by codon-anticodon base pairing. This leads to the displacement of eIF-1 to allow GTPase-activating protein (GAP) eIF-5-mediated hydrolysis of eIF2-bound GTP. Hydrolysis of GTP and release of Pi, which makes GTP hydrolysis irreversible, causes the release of the eIF-2-GDP binary complex from the 40S subunit, an event that is essential for the subsequent joining of the 60S ribosomal subunit to form an elongation-competent 80S ribosome. In order for eIF-2 to recycle and catalyze another round of initiation, the GDP bound to eIF-2 must be exchanged with GTP by way of a reaction catalyzed by GDP-GTP exchange factor (GEF) eIF-2B. The sequence is that of Eukaryotic translation initiation factor 2 subunit gamma (GCD11) from Saccharomyces cerevisiae (strain ATCC 204508 / S288c) (Baker's yeast).